The following is a 255-amino-acid chain: Hydroxyacylglutathione hydrolase (255 aa).

Zn(2+)-binding residues include His56, His58, Asp60, His61, His114, Asp133, and His171.

The protein belongs to the metallo-beta-lactamase superfamily. Glyoxalase II family. As to quaternary structure, monomer. It depends on Zn(2+) as a cofactor.

It catalyses the reaction an S-(2-hydroxyacyl)glutathione + H2O = a 2-hydroxy carboxylate + glutathione + H(+). Its pathway is secondary metabolite metabolism; methylglyoxal degradation; (R)-lactate from methylglyoxal: step 2/2. In terms of biological role, thiolesterase that catalyzes the hydrolysis of S-D-lactoyl-glutathione to form glutathione and D-lactic acid. In Rhodopseudomonas palustris (strain BisB18), this protein is Hydroxyacylglutathione hydrolase.